A 346-amino-acid polypeptide reads, in one-letter code: Patr class I histocompatibility antigen, CH28 alpha chain (346 aa).

The N-terminal stretch at 1–21 is a signal peptide; it reads MAPRSLLLLFSGALALTETWA. An alpha-1 region spans residues 22–111; sequence GSHSLRYFST…LLRRYNQSEA (90 aa). Residues 22-305 are Extracellular-facing; sequence GSHSLRYFST…EQSPQPTIPI (284 aa). Residue Asn-107 is glycosylated (N-linked (GlcNAc...) asparagine). The segment at 112–203 is alpha-2; sequence GSHTLQGMNG…ENGKETLQRA (92 aa). Disulfide bonds link Cys-122-Cys-185 and Cys-224-Cys-280. The segment at 204 to 295 is alpha-3; that stretch reads DPPKAHIAHH…GLPQPLTLRW (92 aa). The 89-residue stretch at 206–294 folds into the Ig-like C1-type domain; it reads PKAHIAHHPI…EGLPQPLTLR (89 aa). A connecting peptide region spans residues 296–305; the sequence is EQSPQPTIPI. The chain crosses the membrane as a helical span at residues 306 to 329; that stretch reads VGIVAGLVVLGAVVTGAVVAAVMW. The Cytoplasmic portion of the chain corresponds to 330 to 346; that stretch reads RKKSSDRNRGSYSQAAV.

It belongs to the MHC class I family. As to quaternary structure, heterodimer of an alpha chain and a beta chain (beta-2-microglobulin).

It is found in the membrane. Involved in the presentation of foreign antigens to the immune system. This chain is Patr class I histocompatibility antigen, CH28 alpha chain, found in Pan troglodytes (Chimpanzee).